The following is a 59-amino-acid chain: Large ribosomal subunit protein uL30 (59 aa).

Belongs to the universal ribosomal protein uL30 family. As to quaternary structure, part of the 50S ribosomal subunit.

The chain is Large ribosomal subunit protein uL30 from Mycobacterium sp. (strain JLS).